The following is a 412-amino-acid chain: CCA-adding enzyme (412 aa).

Residues Ser-41 and Lys-44 each contribute to the ATP site. Ser-41 and Lys-44 together coordinate CTP. Mg(2+) is bound by residues Asp-53, Asp-55, and Asp-106. Residues His-129, Lys-149, and Tyr-158 each coordinate ATP. CTP is bound by residues His-129, Lys-149, and Tyr-158.

It belongs to the tRNA nucleotidyltransferase/poly(A) polymerase family. Archaeal CCA-adding enzyme subfamily. In terms of assembly, homodimer. Forms a tetramer upon binding two tRNAs. However, tRNA-induced tetramer formation is not required for CCA addition. The cofactor is Mg(2+).

It carries out the reaction a tRNA precursor + 2 CTP + ATP = a tRNA with a 3' CCA end + 3 diphosphate. It catalyses the reaction a tRNA with a 3' CCA end + 2 CTP + ATP = a tRNA with a 3' CCACCA end + 3 diphosphate. Catalyzes the addition and repair of the essential 3'-terminal CCA sequence in tRNAs without using a nucleic acid template. Adds these three nucleotides in the order of C, C, and A to the tRNA nucleotide-73, using CTP and ATP as substrates and producing inorganic pyrophosphate. tRNA 3'-terminal CCA addition is required both for tRNA processing and repair. Also involved in tRNA surveillance by mediating tandem CCA addition to generate a CCACCA at the 3' terminus of unstable tRNAs. While stable tRNAs receive only 3'-terminal CCA, unstable tRNAs are marked with CCACCA and rapidly degraded. The structural flexibility of RNA controls the choice between CCA versus CCACCA addition: following the first CCA addition cycle, nucleotide-binding to the active site triggers a clockwise screw motion, producing torque on the RNA. This ejects stable RNAs, whereas unstable RNAs are refolded while bound to the enzyme and subjected to a second CCA catalytic cycle. In Saccharolobus shibatae (strain ATCC 51178 / DSM 5389 / JCM 8931 / NBRC 15437 / B12) (Sulfolobus shibatae), this protein is CCA-adding enzyme.